A 65-amino-acid polypeptide reads, in one-letter code: UPF0434 protein Rpal_0270 (65 aa).

It belongs to the UPF0434 family.

The sequence is that of UPF0434 protein Rpal_0270 from Rhodopseudomonas palustris (strain TIE-1).